A 211-amino-acid polypeptide reads, in one-letter code: Pyridoxine/pyridoxamine 5'-phosphate oxidase (211 aa).

Substrate-binding positions include 7 to 10 and lysine 65; that span reads RTDY. Residues 60-65, 75-76, arginine 81, and lysine 82 each bind FMN; these read RILLIK and FT. 3 residues coordinate substrate: tyrosine 122, arginine 126, and serine 130. FMN contacts are provided by residues 139 to 140 and tryptophan 183; that span reads QS. 189-191 serves as a coordination point for substrate; the sequence is RLH. Residue arginine 193 coordinates FMN.

The protein belongs to the pyridoxamine 5'-phosphate oxidase family. Homodimer. It depends on FMN as a cofactor.

The enzyme catalyses pyridoxamine 5'-phosphate + O2 + H2O = pyridoxal 5'-phosphate + H2O2 + NH4(+). It carries out the reaction pyridoxine 5'-phosphate + O2 = pyridoxal 5'-phosphate + H2O2. The protein operates within cofactor metabolism; pyridoxal 5'-phosphate salvage; pyridoxal 5'-phosphate from pyridoxamine 5'-phosphate: step 1/1. It participates in cofactor metabolism; pyridoxal 5'-phosphate salvage; pyridoxal 5'-phosphate from pyridoxine 5'-phosphate: step 1/1. Catalyzes the oxidation of either pyridoxine 5'-phosphate (PNP) or pyridoxamine 5'-phosphate (PMP) into pyridoxal 5'-phosphate (PLP). The protein is Pyridoxine/pyridoxamine 5'-phosphate oxidase of Janthinobacterium sp. (strain Marseille) (Minibacterium massiliensis).